The following is a 449-amino-acid chain: Histidinol dehydrogenase (449 aa).

NAD(+)-binding residues include Y135, Q199, and N229. Substrate-binding residues include T252, Q274, and H277. Residues Q274 and H277 each contribute to the Zn(2+) site. Residues E343 and H344 each act as proton acceptor in the active site. 4 residues coordinate substrate: H344, D377, E431, and H436. D377 provides a ligand contact to Zn(2+). H436 lines the Zn(2+) pocket.

The protein belongs to the histidinol dehydrogenase family. Zn(2+) is required as a cofactor.

The catalysed reaction is L-histidinol + 2 NAD(+) + H2O = L-histidine + 2 NADH + 3 H(+). The protein operates within amino-acid biosynthesis; L-histidine biosynthesis; L-histidine from 5-phospho-alpha-D-ribose 1-diphosphate: step 9/9. Its function is as follows. Catalyzes the sequential NAD-dependent oxidations of L-histidinol to L-histidinaldehyde and then to L-histidine. The sequence is that of Histidinol dehydrogenase from Corynebacterium diphtheriae (strain ATCC 700971 / NCTC 13129 / Biotype gravis).